The sequence spans 788 residues: Auxin response factor 4 (788 aa).

Positions Met-1–Asp-19 are enriched in acidic residues. The segment at Met-1–Ser-53 is disordered. Low complexity predominate over residues Ser-38 to Ser-53. Residues Phe-177–Ala-279 constitute a DNA-binding region (TF-B3). Residues Leu-413–Pro-433 form a disordered region. A PB1 domain is found at Arg-665 to Lys-747.

Belongs to the ARF family. As to quaternary structure, homodimers and heterodimers. In terms of tissue distribution, expressed in the whole plant.

It localises to the nucleus. Auxin response factors (ARFs) are transcriptional factors that bind specifically to the DNA sequence 5'-TGTCTC-3' found in the auxin-responsive promoter elements (AuxREs). Could act as transcriptional activator or repressor. Formation of heterodimers with Aux/IAA proteins may alter their ability to modulate early auxin response genes expression. This chain is Auxin response factor 4 (ARF4), found in Arabidopsis thaliana (Mouse-ear cress).